The sequence spans 304 residues: Ribonuclease Z (304 aa).

Residues H63, H65, D67, H68, H141, D208, and H266 each contribute to the Zn(2+) site. D67 acts as the Proton acceptor in catalysis.

It belongs to the RNase Z family. As to quaternary structure, homodimer. Zn(2+) is required as a cofactor.

It catalyses the reaction Endonucleolytic cleavage of RNA, removing extra 3' nucleotides from tRNA precursor, generating 3' termini of tRNAs. A 3'-hydroxy group is left at the tRNA terminus and a 5'-phosphoryl group is left at the trailer molecule.. Its function is as follows. Zinc phosphodiesterase, which displays some tRNA 3'-processing endonuclease activity. Probably involved in tRNA maturation, by removing a 3'-trailer from precursor tRNA. This is Ribonuclease Z from Chlamydia muridarum (strain MoPn / Nigg).